A 330-amino-acid polypeptide reads, in one-letter code: Beta-hexosaminidase (330 aa).

Residues Asp-62, Arg-70, Arg-130, and 160–161 (KH) contribute to the substrate site. Catalysis depends on His-173, which acts as the Proton donor/acceptor. Asp-242 serves as the catalytic Nucleophile.

It belongs to the glycosyl hydrolase 3 family. NagZ subfamily. In terms of assembly, monomer.

Its subcellular location is the cytoplasm. It carries out the reaction Hydrolysis of terminal non-reducing N-acetyl-D-hexosamine residues in N-acetyl-beta-D-hexosaminides.. Its pathway is cell wall biogenesis; peptidoglycan recycling. Plays a role in peptidoglycan recycling by cleaving the terminal beta-1,4-linked N-acetylglucosamine (GlcNAc) from peptide-linked peptidoglycan fragments, giving rise to free GlcNAc, anhydro-N-acetylmuramic acid and anhydro-N-acetylmuramic acid-linked peptides. Plays a role in beta-lactam antibiotic resistance via its role in generating anhydro-N-acetylmuramic acid-linked peptides; these peptides function as signaling molecules that induce high-level expression of the beta-lactamase AmpC. The chain is Beta-hexosaminidase from Vibrio cholerae serotype O1 (strain ATCC 39315 / El Tor Inaba N16961).